We begin with the raw amino-acid sequence, 392 residues long: Formate-dependent phosphoribosylglycinamide formyltransferase (392 aa).

N(1)-(5-phospho-beta-D-ribosyl)glycinamide contacts are provided by residues 12 to 13 (EL) and glutamate 72. ATP-binding positions include arginine 104, lysine 145, 150–155 (SSGKGQ), 185–188 (EAFV), and glutamate 193. Residues 109–300 (DLAARDLGLR…EFELHARAVL (192 aa)) enclose the ATP-grasp domain. Residues glutamate 258 and glutamate 270 each contribute to the Mg(2+) site. N(1)-(5-phospho-beta-D-ribosyl)glycinamide-binding positions include aspartate 277, lysine 348, and 355 to 356 (RR).

It belongs to the PurK/PurT family. In terms of assembly, homodimer.

The catalysed reaction is N(1)-(5-phospho-beta-D-ribosyl)glycinamide + formate + ATP = N(2)-formyl-N(1)-(5-phospho-beta-D-ribosyl)glycinamide + ADP + phosphate + H(+). The protein operates within purine metabolism; IMP biosynthesis via de novo pathway; N(2)-formyl-N(1)-(5-phospho-D-ribosyl)glycinamide from N(1)-(5-phospho-D-ribosyl)glycinamide (formate route): step 1/1. Functionally, involved in the de novo purine biosynthesis. Catalyzes the transfer of formate to 5-phospho-ribosyl-glycinamide (GAR), producing 5-phospho-ribosyl-N-formylglycinamide (FGAR). Formate is provided by PurU via hydrolysis of 10-formyl-tetrahydrofolate. The protein is Formate-dependent phosphoribosylglycinamide formyltransferase of Chlorobaculum tepidum (strain ATCC 49652 / DSM 12025 / NBRC 103806 / TLS) (Chlorobium tepidum).